A 295-amino-acid chain; its full sequence is 4-hydroxy-tetrahydrodipicolinate synthase (295 aa).

A pyruvate-binding site is contributed by T47. The active-site Proton donor/acceptor is Y135. Residue K163 is the Schiff-base intermediate with substrate of the active site. Residue I204 coordinates pyruvate.

It belongs to the DapA family. Homotetramer; dimer of dimers.

It localises to the cytoplasm. It catalyses the reaction L-aspartate 4-semialdehyde + pyruvate = (2S,4S)-4-hydroxy-2,3,4,5-tetrahydrodipicolinate + H2O + H(+). The protein operates within amino-acid biosynthesis; L-lysine biosynthesis via DAP pathway; (S)-tetrahydrodipicolinate from L-aspartate: step 3/4. Catalyzes the condensation of (S)-aspartate-beta-semialdehyde [(S)-ASA] and pyruvate to 4-hydroxy-tetrahydrodipicolinate (HTPA). The protein is 4-hydroxy-tetrahydrodipicolinate synthase of Caldicellulosiruptor bescii (strain ATCC BAA-1888 / DSM 6725 / KCTC 15123 / Z-1320) (Anaerocellum thermophilum).